The following is a 367-amino-acid chain: MSETKTNLLDLDRDAMRAFFVELGEKPFRADQVMKWIYHFGCDDFDQMNNVNKVLRERLKAIAEIRAPEVSREQRSSDGTIKWALQVGGQEVETVYIPEEDRATLCVSSQVGCALECKFCSTAQQGFNRNLKVSEIIGQVWRAAKIVGGKRPITNVVMMGMGEPLLNLANVVPAMRLMMDDFGYGISKRRVTISTSGVVPALDMLGDQIDVALAISLHAPNDKLRSEIMPINDKYNIEEFLAGVRRYLGKSNANGGRVTVEYVLLDHINDDMQHAHELAKVLKDTPSKINLIPFNPFPGNPYGKPSNSRIDRFSKVLMEYGFTVIVRKTRGDDIDAACGQLVGEVIDRTKRTMKNRMQQDGISVKMV.

The active-site Proton acceptor is glutamate 93. Residues 99 to 333 (EEDRATLCVS…VIVRKTRGDD (235 aa)) enclose the Radical SAM core domain. An intrachain disulfide couples cysteine 106 to cysteine 338. Residues cysteine 113, cysteine 117, and cysteine 120 each contribute to the [4Fe-4S] cluster site. S-adenosyl-L-methionine-binding positions include 162-163 (GE), serine 194, 216-218 (SLH), and asparagine 295. The active-site S-methylcysteine intermediate is cysteine 338.

It belongs to the radical SAM superfamily. RlmN family. [4Fe-4S] cluster is required as a cofactor.

The protein localises to the cytoplasm. It carries out the reaction adenosine(2503) in 23S rRNA + 2 reduced [2Fe-2S]-[ferredoxin] + 2 S-adenosyl-L-methionine = 2-methyladenosine(2503) in 23S rRNA + 5'-deoxyadenosine + L-methionine + 2 oxidized [2Fe-2S]-[ferredoxin] + S-adenosyl-L-homocysteine. It catalyses the reaction adenosine(37) in tRNA + 2 reduced [2Fe-2S]-[ferredoxin] + 2 S-adenosyl-L-methionine = 2-methyladenosine(37) in tRNA + 5'-deoxyadenosine + L-methionine + 2 oxidized [2Fe-2S]-[ferredoxin] + S-adenosyl-L-homocysteine. Specifically methylates position 2 of adenine 2503 in 23S rRNA and position 2 of adenine 37 in tRNAs. m2A2503 modification seems to play a crucial role in the proofreading step occurring at the peptidyl transferase center and thus would serve to optimize ribosomal fidelity. The protein is Dual-specificity RNA methyltransferase RlmN of Aeromonas hydrophila subsp. hydrophila (strain ATCC 7966 / DSM 30187 / BCRC 13018 / CCUG 14551 / JCM 1027 / KCTC 2358 / NCIMB 9240 / NCTC 8049).